Consider the following 292-residue polypeptide: Pyridoxal 5'-phosphate synthase subunit PdxS (292 aa).

Aspartate 22 serves as a coordination point for D-ribose 5-phosphate. Residue lysine 79 is the Schiff-base intermediate with D-ribose 5-phosphate of the active site. Glycine 151 contributes to the D-ribose 5-phosphate binding site. Position 163 (arginine 163) interacts with D-glyceraldehyde 3-phosphate. D-ribose 5-phosphate contacts are provided by residues glycine 212 and glycine 233–serine 234.

The protein belongs to the PdxS/SNZ family. In the presence of PdxT, forms a dodecamer of heterodimers.

It catalyses the reaction aldehydo-D-ribose 5-phosphate + D-glyceraldehyde 3-phosphate + L-glutamine = pyridoxal 5'-phosphate + L-glutamate + phosphate + 3 H2O + H(+). The protein operates within cofactor biosynthesis; pyridoxal 5'-phosphate biosynthesis. Its function is as follows. Catalyzes the formation of pyridoxal 5'-phosphate from ribose 5-phosphate (RBP), glyceraldehyde 3-phosphate (G3P) and ammonia. The ammonia is provided by the PdxT subunit. Can also use ribulose 5-phosphate and dihydroxyacetone phosphate as substrates, resulting from enzyme-catalyzed isomerization of RBP and G3P, respectively. This Thermoanaerobacter pseudethanolicus (strain ATCC 33223 / 39E) (Clostridium thermohydrosulfuricum) protein is Pyridoxal 5'-phosphate synthase subunit PdxS.